We begin with the raw amino-acid sequence, 1024 residues long: Gamma-tubulin complex component 5 (1024 aa).

Disordered stretches follow at residues 155 to 203 and 521 to 545; these read IGPY…LDPC and TENE…SSRQ. Positions 189 to 203 are enriched in basic and acidic residues; that stretch reads TPLEEQDQNRKLDPC. Positions 531 to 543 are enriched in low complexity; that stretch reads ASASSGSDQGPSS.

This sequence belongs to the TUBGCP family. Component of the gamma-tubulin ring complex (gTuRC) consisting of TUBGCP2, TUBGCP3, TUBGCP4, TUBGCP5 and TUBGCP6 and gamma-tubulin TUBG1 or TUBG2. TUBGCP2, TUBGCP3, TUBGCP4, TUBGCP5 and TUBGCP6 assemble in a 5:5:2:1:1 stoichiometry; each is associated with a gamma-tubulin, thereby arranging 14 gamma-tubulins in a helical manner. Gamma-tubulin at the first position is blocked by TUBGCP3 at the last position, allowing 13 protafilaments to grow into a microtubule. The gTuRC (via TUBGCP3 and TUBGCP6) interacts with ACTB and MZT1; the interactions form a luminal bridge that stabilizes the initial structure during complex assembly. The gTuRC (via TUBGCP2) interacts with MZT2A/MZT2B and CDK5RAP2 (via CM1 motif); the interactions play a role in gTuRC activation. Widely expressed, with highest levels in heart and skeletal muscle and moderate levels in brain.

The protein localises to the cytoplasm. It localises to the cytoskeleton. It is found in the microtubule organizing center. Its subcellular location is the centrosome. Component of the gamma-tubulin ring complex (gTuRC) which mediates microtubule nucleation. The gTuRC regulates the minus-end nucleation of alpha-beta tubulin heterodimers that grow into microtubule protafilaments, a critical step in centrosome duplication and spindle formation. This is Gamma-tubulin complex component 5 (TUBGCP5) from Homo sapiens (Human).